Reading from the N-terminus, the 382-residue chain is Mating-type protein a-1 (382 aa).

Positions 116-184 form a DNA-binding region, HMG box; sequence IPRPPNAYIL…RLLLENPDYR (69 aa).

In terms of assembly, binds in vitro to DNA containing a specific core sequence 5'-CTTTG-3'.

The protein localises to the nucleus. Its function is as follows. Mating type proteins are sequence specific DNA-binding proteins that act as master switches in yeast differentiation by controlling gene expression in a cell type-specific fashion. Transcriptional activator that induces the transcription of a-specific genes like mating factor mfa-1. Required for mating as an a-cell, blocking of heterokaryon formation (vegetative incompatibility) and for perithecium induction. This Neurospora crassa protein is Mating-type protein a-1 (mta-1).